Reading from the N-terminus, the 156-residue chain is Regulatory protein RecX (156 aa).

Belongs to the RecX family.

The protein resides in the cytoplasm. Functionally, modulates RecA activity. This chain is Regulatory protein RecX, found in Pseudomonas putida (strain ATCC 700007 / DSM 6899 / JCM 31910 / BCRC 17059 / LMG 24140 / F1).